The chain runs to 373 residues: Glutamate 5-kinase (373 aa).

Residue lysine 15 participates in ATP binding. Serine 55, aspartate 142, and asparagine 154 together coordinate substrate. Residues 174–175 (TD) and 216–222 (TGGMATK) contribute to the ATP site. One can recognise a PUA domain in the interval 281-359 (AGSIVVDAGA…SEIERILGFR (79 aa)).

It belongs to the glutamate 5-kinase family.

It localises to the cytoplasm. The catalysed reaction is L-glutamate + ATP = L-glutamyl 5-phosphate + ADP. Its pathway is amino-acid biosynthesis; L-proline biosynthesis; L-glutamate 5-semialdehyde from L-glutamate: step 1/2. In terms of biological role, catalyzes the transfer of a phosphate group to glutamate to form L-glutamate 5-phosphate. The polypeptide is Glutamate 5-kinase (Geobacter sp. (strain M21)).